The chain runs to 182 residues: Small ribosomal subunit protein uS4c (182 aa).

Residues 82 to 143 enclose the S4 RNA-binding domain; the sequence is MRLDNILFRL…KERSKVLIQN (62 aa).

This sequence belongs to the universal ribosomal protein uS4 family. As to quaternary structure, part of the 30S ribosomal subunit. Contacts protein S5. The interaction surface between S4 and S5 is involved in control of translational fidelity.

It localises to the plastid. The protein localises to the chloroplast. In terms of biological role, one of the primary rRNA binding proteins, it binds directly to 16S rRNA where it nucleates assembly of the body of the 30S subunit. Its function is as follows. With S5 and S12 plays an important role in translational accuracy. This is Small ribosomal subunit protein uS4c (rps4) from Alophia veracruzana (Mexican pine woods lily).